Here is a 631-residue protein sequence, read N- to C-terminus: Phosphomethylpyrimidine synthase (631 aa).

Residues asparagine 239, methionine 268, tyrosine 297, histidine 333, 353-355 (SRG), 394-397 (DGLR), and glutamate 433 each bind substrate. Histidine 437 contributes to the Zn(2+) binding site. Position 460 (tyrosine 460) interacts with substrate. Residue histidine 501 coordinates Zn(2+). Residues cysteine 581, cysteine 584, and cysteine 589 each coordinate [4Fe-4S] cluster.

Belongs to the ThiC family. In terms of assembly, homodimer. The cofactor is [4Fe-4S] cluster.

The catalysed reaction is 5-amino-1-(5-phospho-beta-D-ribosyl)imidazole + S-adenosyl-L-methionine = 4-amino-2-methyl-5-(phosphooxymethyl)pyrimidine + CO + 5'-deoxyadenosine + formate + L-methionine + 3 H(+). The protein operates within cofactor biosynthesis; thiamine diphosphate biosynthesis. Catalyzes the synthesis of the hydroxymethylpyrimidine phosphate (HMP-P) moiety of thiamine from aminoimidazole ribotide (AIR) in a radical S-adenosyl-L-methionine (SAM)-dependent reaction. This Salmonella paratyphi B (strain ATCC BAA-1250 / SPB7) protein is Phosphomethylpyrimidine synthase.